A 234-amino-acid polypeptide reads, in one-letter code: Ammonia monooxygenase gamma subunit (234 aa).

A signal peptide spans 1–20; the sequence is MRMIKFLLLAILLAPFVAHS. Positions 38–193 constitute a Cytochrome c domain; the sequence is ESLQRGAKGF…RFVADLVNYM (156 aa). 3 residues coordinate heme c: Cys51, Cys54, and His55. A helical transmembrane segment spans residues 206–226; it reads ELGITVLLFLFGMLGLTYLLK.

Belongs to the cytochrome c family. The soluble ammonia monooxygenase is a nonamer composed of three alpha subunits (AmoA), three beta subunits (AmoB) and three gamma subunits (Cytochrome c1 PetC). Heme c serves as cofactor.

It is found in the cell membrane. The protein localises to the cytoplasm. Its function is as follows. Part of the ammonia monooxygenase complex, which catalyzes the oxidation of ammonia to hydroxylamine, the first reaction in the process of ammonia oxidation to nitrite. The polypeptide is Ammonia monooxygenase gamma subunit (Nitrosomonas europaea (strain ATCC 19718 / CIP 103999 / KCTC 2705 / NBRC 14298)).